The chain runs to 335 residues: Methionine import ATP-binding protein MetN 1 (335 aa).

The 241-residue stretch at 2-242 (IEFHNVHKTY…PQHPTTRRFV (241 aa)) folds into the ABC transporter domain. 38–45 (GHSGAGKS) contributes to the ATP binding site.

This sequence belongs to the ABC transporter superfamily. Methionine importer (TC 3.A.1.24) family. In terms of assembly, the complex is composed of two ATP-binding proteins (MetN), two transmembrane proteins (MetI) and a solute-binding protein (MetQ).

It localises to the cell inner membrane. It carries out the reaction L-methionine(out) + ATP + H2O = L-methionine(in) + ADP + phosphate + H(+). The catalysed reaction is D-methionine(out) + ATP + H2O = D-methionine(in) + ADP + phosphate + H(+). Its function is as follows. Part of the ABC transporter complex MetNIQ involved in methionine import. Responsible for energy coupling to the transport system. The chain is Methionine import ATP-binding protein MetN 1 from Pseudomonas savastanoi pv. phaseolicola (strain 1448A / Race 6) (Pseudomonas syringae pv. phaseolicola (strain 1448A / Race 6)).